Here is a 689-residue protein sequence, read N- to C-terminus: FAST kinase domain-containing protein 2, mitochondrial (689 aa).

Phosphoserine occurs at positions 113 and 126. Residues V617–K674 form the RAP domain.

Belongs to the FAST kinase family. In terms of assembly, monomer. Found in a complex with GRSF1, DDX28, DHX30 and FASTKD5. Associates with the 16S mitochondrial rRNA (16S mt-rRNA). Forms a regulatory protein-RNA complex, consisting of RCC1L, NGRN, RPUSD3, RPUSD4, TRUB2, FASTKD2 and 16S mt-rRNA. In terms of tissue distribution, ubiquitously expressed. Expression detected in spleen, testis, colon, heart, smooth muscle, kidney, brain, lung, liver, brown and white adipose tissue with highest expression in testis, heart and smooth muscle.

The protein resides in the mitochondrion matrix. It localises to the mitochondrion nucleoid. In terms of biological role, plays an important role in assembly of the mitochondrial large ribosomal subunit. As a component of a functional protein-RNA module, consisting of RCC1L, NGRN, RPUSD3, RPUSD4, TRUB2, FASTKD2 and 16S mitochondrial ribosomal RNA (16S mt-rRNA), controls 16S mt-rRNA abundance and is required for intra-mitochondrial translation. May play a role in mitochondrial apoptosis. The chain is FAST kinase domain-containing protein 2, mitochondrial (Fastkd2) from Mus musculus (Mouse).